A 307-amino-acid polypeptide reads, in one-letter code: Mycothiol acetyltransferase (307 aa).

2 consecutive N-acetyltransferase domains span residues 12–157 (TRTD…PPLP) and 160–307 (VTLR…YQLG). Glu-43 provides a ligand contact to 1D-myo-inositol 2-(L-cysteinylamino)-2-deoxy-alpha-D-glucopyranoside. 87–89 (LAV) provides a ligand contact to acetyl-CoA. 3 residues coordinate 1D-myo-inositol 2-(L-cysteinylamino)-2-deoxy-alpha-D-glucopyranoside: Glu-187, Lys-227, and Glu-239. Acetyl-CoA-binding positions include 243 to 245 (LGV) and 250 to 256 (HGGGLGK). Tyr-278 lines the 1D-myo-inositol 2-(L-cysteinylamino)-2-deoxy-alpha-D-glucopyranoside pocket.

It belongs to the acetyltransferase family. MshD subfamily. Monomer.

It carries out the reaction 1D-myo-inositol 2-(L-cysteinylamino)-2-deoxy-alpha-D-glucopyranoside + acetyl-CoA = mycothiol + CoA + H(+). Catalyzes the transfer of acetyl from acetyl-CoA to desacetylmycothiol (Cys-GlcN-Ins) to form mycothiol. In Salinispora tropica (strain ATCC BAA-916 / DSM 44818 / JCM 13857 / NBRC 105044 / CNB-440), this protein is Mycothiol acetyltransferase.